The following is a 633-amino-acid chain: Threonine--tRNA ligase (633 aa).

The 61-residue stretch at 1–61 (MINIHFSNNL…IENCTFEVIT (61 aa)) folds into the TGS domain. Positions 242–533 (DHRKIGRELE…LIEHHSGKFP (292 aa)) are catalytic. C333, H384, and H510 together coordinate Zn(2+).

Belongs to the class-II aminoacyl-tRNA synthetase family. Homodimer. It depends on Zn(2+) as a cofactor.

Its subcellular location is the cytoplasm. It carries out the reaction tRNA(Thr) + L-threonine + ATP = L-threonyl-tRNA(Thr) + AMP + diphosphate + H(+). Catalyzes the attachment of threonine to tRNA(Thr) in a two-step reaction: L-threonine is first activated by ATP to form Thr-AMP and then transferred to the acceptor end of tRNA(Thr). Also edits incorrectly charged L-seryl-tRNA(Thr). The sequence is that of Threonine--tRNA ligase from Ehrlichia chaffeensis (strain ATCC CRL-10679 / Arkansas).